A 246-amino-acid polypeptide reads, in one-letter code: MKKLFVLCVCFFCSITAAGAALPDLKIEKLEEGVFVHTSFEEVNGWGVVTKHGLVVLVNTDAYLIDTPFTATDTEKLVNWFVERGYEIKGTISSHFHSDSTGGIEWLNSQSIPTYASELTNELLKKSGKVQAKYSFSEVSYWLVKNKIEVFYPGPGHTQDNLVVWLPESKILFGGCFIKPHGLGNLGDANLEAWPKSAKILMSKYGKAKLVVSSHSEKGDASLMKRTWEQALKGLKESKKTSSPSN.

Positions 1–20 (MKKLFVLCVCFFCSITAAGA) are cleaved as a signal peptide. Positions 95, 97, 99, 157, and 176 each coordinate Zn(2+). Asp99 serves as a coordination point for a beta-lactam. 2 residues coordinate a beta-lactam: Lys179 and Asn185. His215 serves as a coordination point for Zn(2+).

This sequence belongs to the metallo-beta-lactamase superfamily. Class-B beta-lactamase family. In terms of assembly, monomer. The cofactor is Zn(2+).

The protein localises to the periplasm. It catalyses the reaction a beta-lactam + H2O = a substituted beta-amino acid. Its function is as follows. Confers resistance to the different beta-lactam antibiotics (penicillin, cephalosporin and carbapenem) via the hydrolysis of the beta-lactam ring. Exhibits higher catalytic efficiency toward ticarcillin and piperacillin than blaIMP-1. Exhibits catalytic activity for carbapenem compounds, but has a preference for imipenem and ertapenem over meropenem. Has high efficiency for the hydrolysis of cefuroxime. Exhibits hydrolysis of all cephalosporins tested. Exhibits no hydrolysis of temocillin, the 6-alpha-methoxy semisynthetic derivative of ticarcillin. This is Metallo-beta-lactamase type 2 from Pseudomonas aeruginosa.